Here is a 304-residue protein sequence, read N- to C-terminus: Dihydroorotate dehydrogenase B (NAD(+)), catalytic subunit (304 aa).

Residues Ser-22 and 46-47 (KG) each bind FMN. Substrate is bound by residues Lys-46 and 70–74 (NAIGL). Asn-100 and Asn-128 together coordinate FMN. A substrate-binding site is contributed by Asn-128. Cys-131 (nucleophile) is an active-site residue. Residues Lys-166 and Ile-192 each coordinate FMN. 193 to 194 (NT) provides a ligand contact to substrate. Residues Gly-218, 244–245 (GG), and 266–267 (GT) contribute to the FMN site.

The protein belongs to the dihydroorotate dehydrogenase family. Type 1 subfamily. As to quaternary structure, heterotetramer of 2 PyrK and 2 PyrD type B subunits. The cofactor is FMN.

The protein localises to the cytoplasm. It catalyses the reaction (S)-dihydroorotate + NAD(+) = orotate + NADH + H(+). It functions in the pathway pyrimidine metabolism; UMP biosynthesis via de novo pathway; orotate from (S)-dihydroorotate (NAD(+) route): step 1/1. In terms of biological role, catalyzes the conversion of dihydroorotate to orotate with NAD(+) as electron acceptor. This Trichlorobacter lovleyi (strain ATCC BAA-1151 / DSM 17278 / SZ) (Geobacter lovleyi) protein is Dihydroorotate dehydrogenase B (NAD(+)), catalytic subunit (pyrD).